Consider the following 261-residue polypeptide: 3-hydroxyacyl-CoA dehydrogenase type-2 (261 aa).

Ala-2 is subject to N-acetylalanine. NAD(+) contacts are provided by Ser-20, Leu-22, and Asp-41. An N6-acetyllysine; alternate modification is found at Lys-53. Lys-53 bears the N6-succinyllysine; alternate mark. Val-65 serves as a coordination point for NAD(+). Lys-69 carries the post-translational modification N6-acetyllysine. Residue Cys-91 coordinates NAD(+). 2 positions are modified to N6-acetyllysine: Lys-99 and Lys-105. Ser-155 provides a ligand contact to substrate. 4 residues coordinate NAD(+): Tyr-168, Lys-172, Phe-201, and Thr-203. Residue Tyr-168 is the Proton acceptor of the active site. The residue at position 212 (Lys-212) is an N6-acetyllysine; alternate. The residue at position 212 (Lys-212) is an N6-succinyllysine; alternate.

The protein belongs to the short-chain dehydrogenases/reductases (SDR) family. As to quaternary structure, homotetramer. Component of mitochondrial ribonuclease P, a complex composed of TRMT10C/MRPP1, HSD17B10/MRPP2 and PRORP/MRPP3. Interacts with TRMT10C/MRPP1; forming the MRPP1-MRPP2 subcomplex of the mitochondrial ribonuclease P complex.

Its subcellular location is the mitochondrion. The protein resides in the mitochondrion matrix. It localises to the mitochondrion nucleoid. The enzyme catalyses a (3S)-3-hydroxyacyl-CoA + NAD(+) = a 3-oxoacyl-CoA + NADH + H(+). It catalyses the reaction (2S,3S)-3-hydroxy-2-methylbutanoyl-CoA + NAD(+) = 2-methyl-3-oxobutanoyl-CoA + NADH + H(+). The catalysed reaction is testosterone + NAD(+) = androst-4-ene-3,17-dione + NADH + H(+). It carries out the reaction 5alpha-androstane-3alpha,17beta-diol + NAD(+) = 17beta-hydroxy-5alpha-androstan-3-one + NADH + H(+). The enzyme catalyses 17beta-estradiol + NAD(+) = estrone + NADH + H(+). It catalyses the reaction cholate + NAD(+) = 3alpha,12alpha-dihydroxy-7-oxo-5beta-cholanate + NADH + H(+). The catalysed reaction is (3S)-3-hydroxybutanoyl-CoA + NAD(+) = acetoacetyl-CoA + NADH + H(+). It carries out the reaction (3S)-hydroxyoctanoyl-CoA + NAD(+) = 3-oxooctanoyl-CoA + NADH + H(+). The enzyme catalyses (3S)-hydroxyhexadecanoyl-CoA + NAD(+) = 3-oxohexadecanoyl-CoA + NADH + H(+). It catalyses the reaction 17beta-hydroxy-5alpha-androstan-3-one + NAD(+) = 5alpha-androstan-3,17-dione + NADH + H(+). The catalysed reaction is 5alpha-pregnan-20beta-ol-3-one + NAD(+) = 5alpha-pregnane-3,20-dione + NADH + H(+). It carries out the reaction 3alpha-hydroxy-5alpha-pregnan-20-one + NAD(+) = 5alpha-pregnane-3,20-dione + NADH + H(+). The enzyme catalyses cortisone + NAD(+) = 17alpha-hydroxypregn-4-en-3,11,20-trione-21-al + NADH + H(+). It catalyses the reaction 11-dehydrocorticosterone + NAD(+) = pregn-4-ene-3,11,20,21-tetraone + NADH + H(+). The catalysed reaction is cortisol + NAD(+) = 11beta,17alpha-dihydroxypregn-4-ene-3,20,21-trione + NADH + H(+). It carries out the reaction chenodeoxycholate + NAD(+) = 7-oxolithocholate + NADH + H(+). The enzyme catalyses ursodeoxycholate + NAD(+) = 7-oxolithocholate + NADH + H(+). It catalyses the reaction 3beta,7beta-dihydroxy-5beta-cholan-24-oate + NAD(+) = 3beta-hydroxy-7-oxo-5beta-cholan-24-oate + NADH + H(+). Its pathway is amino-acid degradation; L-isoleucine degradation. The protein operates within lipid metabolism; fatty acid beta-oxidation. It participates in steroid metabolism. It functions in the pathway lipid metabolism; bile acid biosynthesis. Its function is as follows. Mitochondrial dehydrogenase involved in pathways of fatty acid, branched-chain amino acid and steroid metabolism. Acts as (S)-3-hydroxyacyl-CoA dehydrogenase in mitochondrial fatty acid beta-oxidation, a major degradation pathway of fatty acids. Catalyzes the third step in the beta-oxidation cycle, namely the reversible conversion of (S)-3-hydroxyacyl-CoA to 3-ketoacyl-CoA. Preferentially accepts straight medium- and short-chain acyl-CoA substrates with highest efficiency for (3S)-hydroxybutanoyl-CoA. Acts as 3-hydroxy-2-methylbutyryl-CoA dehydrogenase in branched-chain amino acid catabolic pathway. Catalyzes the oxidation of 3-hydroxy-2-methylbutanoyl-CoA into 2-methyl-3-oxobutanoyl-CoA, a step in isoleucine degradation pathway. Has hydroxysteroid dehydrogenase activity toward steroid hormones and bile acids. Catalyzes the oxidation of 3alpha-, 17beta-, 20beta- and 21-hydroxysteroids and 7alpha- and 7beta-hydroxy bile acids. Oxidizes allopregnanolone/brexanolone at the 3alpha-hydroxyl group, which is known to be critical for the activation of gamma-aminobutyric acid receptors (GABAARs) chloride channel. Has phospholipase C-like activity toward cardiolipin and its oxidized species. Likely oxidizes the 2'-hydroxyl in the head group of cardiolipin to form a ketone intermediate that undergoes nucleophilic attack by water and fragments into diacylglycerol, dihydroxyacetone and orthophosphate. Has higher affinity for cardiolipin with oxidized fatty acids and may degrade these species during the oxidative stress response to protect cells from apoptosis. By interacting with intracellular amyloid-beta, it may contribute to the neuronal dysfunction associated with Alzheimer disease (AD). Essential for structural and functional integrity of mitochondria. In terms of biological role, in addition to mitochondrial dehydrogenase activity, moonlights as a component of mitochondrial ribonuclease P, a complex that cleaves tRNA molecules in their 5'-ends. Together with TRMT10C/MRPP1, forms a subcomplex of the mitochondrial ribonuclease P, named MRPP1-MRPP2 subcomplex, which displays functions that are independent of the ribonuclease P activity. The MRPP1-MRPP2 subcomplex catalyzes the formation of N(1)-methylguanine and N(1)-methyladenine at position 9 (m1G9 and m1A9, respectively) in tRNAs; HSD17B10/MRPP2 acting as a non-catalytic subunit. The MRPP1-MRPP2 subcomplex also acts as a tRNA maturation platform: following 5'-end cleavage by the mitochondrial ribonuclease P complex, the MRPP1-MRPP2 subcomplex enhances the efficiency of 3'-processing catalyzed by ELAC2, retains the tRNA product after ELAC2 processing and presents the nascent tRNA to the mitochondrial CCA tRNA nucleotidyltransferase TRNT1 enzyme. Associates with mitochondrial DNA complexes at the nucleoids to initiate RNA processing and ribosome assembly. This chain is 3-hydroxyacyl-CoA dehydrogenase type-2 (Hsd17b10), found in Rattus norvegicus (Rat).